We begin with the raw amino-acid sequence, 352 residues long: C-C chemokine receptor type 5 (352 aa).

The Extracellular segment spans residues 1-30 (MDYQVSSPTYDIDYYTSEPCQKINVKQIAA). Residue Y3 is modified to Sulfotyrosine. Residues S6 and S7 are each glycosylated (O-linked (GalNAc...) serine). 3 positions are modified to sulfotyrosine: Y10, Y14, and Y15. Intrachain disulfides connect C20-C269 and C101-C178. Residues 31–58 (RLLPPLYSLVFIFGFVGNMLVILILINC) traverse the membrane as a helical segment. Topologically, residues 59-68 (KRLKSMTDIY) are cytoplasmic. A helical membrane pass occupies residues 69–89 (LLNLAISDLFFLLTVPFWAHY). At 90 to 102 (AAAQWDFGNTMCQ) the chain is on the extracellular side. Residues 103 to 124 (LLTGLYFIGFFSGIFFIILLTI) form a helical membrane-spanning segment. The Cytoplasmic portion of the chain corresponds to 125 to 141 (DRYLAIVHAVFALKART). Residues 142–166 (VTFGVVTSVITWVVAVFASLPGIIF) traverse the membrane as a helical segment. Residues 167-198 (TRSQKEGLHYTCSSHFPYSQYQFWKNFQTLKI) lie on the Extracellular side of the membrane. A helical transmembrane segment spans residues 199–218 (VILGLVLPLLVMVICYSGIL). Residues 219–235 (KTLLRCRNEKKRHRAVR) lie on the Cytoplasmic side of the membrane. Residues 236–260 (LIFTIMIVYFLFWAPYNIVLLLNTF) traverse the membrane as a helical segment. Over 261–277 (QEFFGLNNCSSSNRLDQ) the chain is Extracellular. The helical transmembrane segment at 278–301 (AMQVTETLGMTHCCINPIIYAFVG) threads the bilayer. Over 302 to 352 (EKFRNYLLVFFQKHIAKRFCKCCSIFQQEAPERASSVYTRSTGEQEISVGL) the chain is Cytoplasmic. Residues C321, C323, and C324 are each lipidated (S-palmitoyl cysteine). Phosphoserine; by BARK1 occurs at positions 336, 337, 342, and 349.

This sequence belongs to the G-protein coupled receptor 1 family. As to quaternary structure, interacts with PRAF2. Efficient ligand binding to CCL3/MIP-1alpha and CCL4/MIP-1beta requires sulfation, O-glycosylation and sialic acid modifications. Glycosylation on Ser-6 is required for efficient binding of CCL4. Interacts with GRK2. Interacts with ARRB1 and ARRB2. Interacts with CNIH4. Interacts with S100A4; this interaction stimulates T-lymphocyte chemotaxis. In terms of processing, sulfated on at least 2 of the N-terminal tyrosines. Sulfation is required for efficient binding of the chemokines, CCL3 and CCL4. Post-translationally, palmitoylation in the C-terminal is important for cell surface expression. Phosphorylation on serine residues in the C-terminal is stimulated by binding CC chemokines especially by APO-RANTES. In terms of processing, O-glycosylated, but not N-glycosylated. Ser-6 appears to be the major site even if Ser-7 may be also O-glycosylated. Also sialylated glycans present which contribute to chemokine binding. Thr-16 and Ser-17 may also be glycosylated and, if so, with small moieties such as a T-antigen.

Its subcellular location is the cell membrane. In terms of biological role, receptor for a number of inflammatory CC-chemokines including CCL3/MIP-1-alpha, CCL4/MIP-1-beta and RANTES and subsequently transduces a signal by increasing the intracellular calcium ion level. May play a role in the control of granulocytic lineage proliferation or differentiation. Participates in T-lymphocyte migration to the infection site by acting as a chemotactic receptor. This chain is C-C chemokine receptor type 5 (CCR5), found in Pongo abelii (Sumatran orangutan).